The sequence spans 238 residues: Large ribosomal subunit protein uL3 (238 aa).

Glutamine 157 carries the post-translational modification N5-methylglutamine.

Belongs to the universal ribosomal protein uL3 family. Part of the 50S ribosomal subunit. Forms a cluster with proteins L14 and L19. Post-translationally, methylated by PrmB.

In terms of biological role, one of the primary rRNA binding proteins, it binds directly near the 3'-end of the 23S rRNA, where it nucleates assembly of the 50S subunit. The sequence is that of Large ribosomal subunit protein uL3 from Ruthia magnifica subsp. Calyptogena magnifica.